We begin with the raw amino-acid sequence, 194 residues long: Glycerol-3-phosphate acyltransferase (194 aa).

Helical transmembrane passes span 3–23 (AGLF…GLLL), 52–72 (VGIL…LLAW), 80–100 (MQAW…FLLF), 112–132 (VFLA…ILLV), 135–155 (WRYI…IIFF), and 162–182 (LLIA…SNIS).

This sequence belongs to the PlsY family. As to quaternary structure, probably interacts with PlsX.

Its subcellular location is the cell inner membrane. It carries out the reaction an acyl phosphate + sn-glycerol 3-phosphate = a 1-acyl-sn-glycero-3-phosphate + phosphate. It participates in lipid metabolism; phospholipid metabolism. In terms of biological role, catalyzes the transfer of an acyl group from acyl-phosphate (acyl-PO(4)) to glycerol-3-phosphate (G3P) to form lysophosphatidic acid (LPA). This enzyme utilizes acyl-phosphate as fatty acyl donor, but not acyl-CoA or acyl-ACP. The protein is Glycerol-3-phosphate acyltransferase of Trichlorobacter lovleyi (strain ATCC BAA-1151 / DSM 17278 / SZ) (Geobacter lovleyi).